The sequence spans 132 residues: Small ribosomal subunit protein uS8 (132 aa).

The protein belongs to the universal ribosomal protein uS8 family. As to quaternary structure, part of the 30S ribosomal subunit. Contacts proteins S5 and S12.

Functionally, one of the primary rRNA binding proteins, it binds directly to 16S rRNA central domain where it helps coordinate assembly of the platform of the 30S subunit. The polypeptide is Small ribosomal subunit protein uS8 (Geotalea uraniireducens (strain Rf4) (Geobacter uraniireducens)).